Reading from the N-terminus, the 147-residue chain is Basic phospholipase A2 beta-bungarotoxin A1 chain (147 aa).

Positions 1–19 are cleaved as a signal peptide; the sequence is MYPAHLLILSAVCVSLLGA. Positions 20–27 are excised as a propeptide; the sequence is ANIPPHPL. 6 disulfide bridges follow: C54-C146, C56-C72, C71-C127, C78-C120, C88-C113, and C106-C118. Residues Y55, G57, and G59 each contribute to the Ca(2+) site. H75 is a catalytic residue. D76 serves as a coordination point for Ca(2+). D121 is a catalytic residue.

The protein belongs to the phospholipase A2 family. Group I subfamily. D49 sub-subfamily. As to quaternary structure, heterodimer; disulfide-linked. The A chains have phospholipase A2 activity and the B chains show homology with the basic protease inhibitors. The cofactor is Ca(2+). Expressed by the venom gland.

It is found in the secreted. The enzyme catalyses a 1,2-diacyl-sn-glycero-3-phosphocholine + H2O = a 1-acyl-sn-glycero-3-phosphocholine + a fatty acid + H(+). In terms of biological role, snake venom phospholipase A2 (PLA2) that inhibits neuromuscular transmission by blocking acetylcholine release from the nerve termini. PLA2 catalyzes the calcium-dependent hydrolysis of the 2-acyl groups in 3-sn-phosphoglycerides. The protein is Basic phospholipase A2 beta-bungarotoxin A1 chain of Bungarus caeruleus (Indian krait).